Here is a 319-residue protein sequence, read N- to C-terminus: Aliphatic sulfonates import ATP-binding protein SsuB (319 aa).

The region spanning 63–282 is the ABC transporter domain; sequence VTLSGVSKRF…ARASAAFAAL (220 aa). Position 95 to 102 (95 to 102) interacts with ATP; the sequence is GRSGCGKS.

It belongs to the ABC transporter superfamily. Aliphatic sulfonates importer (TC 3.A.1.17.2) family. In terms of assembly, the complex is composed of two ATP-binding proteins (SsuB), two transmembrane proteins (SsuC) and a solute-binding protein (SsuA).

It localises to the cell inner membrane. It carries out the reaction ATP + H2O + aliphatic sulfonate-[sulfonate-binding protein]Side 1 = ADP + phosphate + aliphatic sulfonateSide 2 + [sulfonate-binding protein]Side 1.. Functionally, part of the ABC transporter complex SsuABC involved in aliphatic sulfonates import. Responsible for energy coupling to the transport system. The polypeptide is Aliphatic sulfonates import ATP-binding protein SsuB (Burkholderia ambifaria (strain ATCC BAA-244 / DSM 16087 / CCUG 44356 / LMG 19182 / AMMD) (Burkholderia cepacia (strain AMMD))).